Reading from the N-terminus, the 520-residue chain is Cytochrome P450 6d3 (520 aa).

Cys-461 contacts heme.

Belongs to the cytochrome P450 family. Heme serves as cofactor.

The protein resides in the endoplasmic reticulum membrane. It localises to the microsome membrane. Functionally, metabolizes pyrethroid insecticides and other xenobiotics. This Musca domestica (House fly) protein is Cytochrome P450 6d3 (CYP6D3).